The chain runs to 426 residues: Enolase (426 aa).

Q163 contacts (2R)-2-phosphoglycerate. E205 serves as the catalytic Proton donor. 3 residues coordinate Mg(2+): D242, E285, and D312. Positions 337, 366, 367, and 388 each coordinate (2R)-2-phosphoglycerate. Catalysis depends on K337, which acts as the Proton acceptor.

The protein belongs to the enolase family. Requires Mg(2+) as cofactor.

The protein localises to the cytoplasm. It localises to the secreted. It is found in the cell surface. It carries out the reaction (2R)-2-phosphoglycerate = phosphoenolpyruvate + H2O. It participates in carbohydrate degradation; glycolysis; pyruvate from D-glyceraldehyde 3-phosphate: step 4/5. Functionally, catalyzes the reversible conversion of 2-phosphoglycerate (2-PG) into phosphoenolpyruvate (PEP). It is essential for the degradation of carbohydrates via glycolysis. The protein is Enolase of Gluconobacter oxydans (strain 621H) (Gluconobacter suboxydans).